Reading from the N-terminus, the 296-residue chain is 4-hydroxybenzoate octaprenyltransferase (296 aa).

Helical transmembrane passes span 23–43 (IGILLLLWPTLWGIWLASPGW), 46–66 (GLVLFVFIAGTVLMRSAGCVM), 99–119 (LALALSLVAFILVLQLNPLVV), 141–161 (IPQAYLGIAFGFGIPMAFAAI), 163–183 (GQLPLEAWILLLANVFWAIAY), 211–231 (DVFAVMACYGAFLILMAWVGV), 237–257 (WPYFAGLGVAALVALYHYALI), and 265–285 (CFKAFLHNNWLGAAIFVGVLA).

This sequence belongs to the UbiA prenyltransferase family. Requires Mg(2+) as cofactor.

Its subcellular location is the cell inner membrane. It carries out the reaction all-trans-octaprenyl diphosphate + 4-hydroxybenzoate = 4-hydroxy-3-(all-trans-octaprenyl)benzoate + diphosphate. It participates in cofactor biosynthesis; ubiquinone biosynthesis. Functionally, catalyzes the prenylation of para-hydroxybenzoate (PHB) with an all-trans polyprenyl group. Mediates the second step in the final reaction sequence of ubiquinone-8 (UQ-8) biosynthesis, which is the condensation of the polyisoprenoid side chain with PHB, generating the first membrane-bound Q intermediate 3-octaprenyl-4-hydroxybenzoate. This chain is 4-hydroxybenzoate octaprenyltransferase, found in Methylobacillus flagellatus (strain ATCC 51484 / DSM 6875 / VKM B-1610 / KT).